We begin with the raw amino-acid sequence, 343 residues long: Succinylglutamate desuccinylase (343 aa).

Residues H60, E63, and H157 each contribute to the Zn(2+) site. Residue E221 is part of the active site.

Belongs to the AspA/AstE family. Succinylglutamate desuccinylase subfamily. Zn(2+) serves as cofactor.

The catalysed reaction is N-succinyl-L-glutamate + H2O = L-glutamate + succinate. It participates in amino-acid degradation; L-arginine degradation via AST pathway; L-glutamate and succinate from L-arginine: step 5/5. Its function is as follows. Transforms N(2)-succinylglutamate into succinate and glutamate. This is Succinylglutamate desuccinylase from Idiomarina loihiensis (strain ATCC BAA-735 / DSM 15497 / L2-TR).